The primary structure comprises 284 residues: 4-diphosphocytidyl-2-C-methyl-D-erythritol kinase (284 aa).

Lysine 14 is a catalytic residue. 98 to 108 (PMGGGLGGGSS) contributes to the ATP binding site. Aspartate 140 is an active-site residue.

It belongs to the GHMP kinase family. IspE subfamily.

It carries out the reaction 4-CDP-2-C-methyl-D-erythritol + ATP = 4-CDP-2-C-methyl-D-erythritol 2-phosphate + ADP + H(+). It participates in isoprenoid biosynthesis; isopentenyl diphosphate biosynthesis via DXP pathway; isopentenyl diphosphate from 1-deoxy-D-xylulose 5-phosphate: step 3/6. Catalyzes the phosphorylation of the position 2 hydroxy group of 4-diphosphocytidyl-2C-methyl-D-erythritol. This chain is 4-diphosphocytidyl-2-C-methyl-D-erythritol kinase, found in Shewanella sp. (strain W3-18-1).